The chain runs to 631 residues: Probable methyltransferase PMT16 (631 aa).

Over 1–14 the chain is Cytoplasmic; that stretch reads MNLFTRISSRTKKA. The chain crosses the membrane as a helical; Signal-anchor for type II membrane protein span at residues 15-35; sequence NLYYVTLVALLCIASYLLGIW. The Lumenal segment spans residues 36–631; it reads QNTAVNPRAA…EDKNNTSALS (596 aa). Asparagine 61, asparagine 230, and asparagine 626 each carry an N-linked (GlcNAc...) asparagine glycan.

It belongs to the methyltransferase superfamily.

The protein resides in the endoplasmic reticulum membrane. This chain is Probable methyltransferase PMT16, found in Arabidopsis thaliana (Mouse-ear cress).